We begin with the raw amino-acid sequence, 453 residues long: Bifunctional protein GlmU (453 aa).

The pyrophosphorylase stretch occupies residues 1–225; the sequence is MHAHVILAAG…AEEALGVNTR (225 aa). UDP-N-acetyl-alpha-D-glucosamine-binding positions include 7–10, lysine 21, glutamine 72, and 77–78; these read LAAG and GT. Aspartate 102 lines the Mg(2+) pocket. Residues glycine 138, glutamate 152, asparagine 167, and asparagine 223 each contribute to the UDP-N-acetyl-alpha-D-glucosamine site. Asparagine 223 is a binding site for Mg(2+). The tract at residues 226–246 is linker; the sequence is EELARVEGVLLRRLRAEWMGK. The N-acetyltransferase stretch occupies residues 247–453; sequence GVRMILPETI…GYALRKLGEG (207 aa). The UDP-N-acetyl-alpha-D-glucosamine site is built by arginine 329 and lysine 347. Histidine 359 (proton acceptor) is an active-site residue. Tyrosine 362 and asparagine 373 together coordinate UDP-N-acetyl-alpha-D-glucosamine. Acetyl-CoA contacts are provided by residues alanine 376, 382-383, serine 401, alanine 419, and arginine 436; that span reads NY.

It in the N-terminal section; belongs to the N-acetylglucosamine-1-phosphate uridyltransferase family. The protein in the C-terminal section; belongs to the transferase hexapeptide repeat family. As to quaternary structure, homotrimer. It depends on Mg(2+) as a cofactor.

It localises to the cytoplasm. It catalyses the reaction alpha-D-glucosamine 1-phosphate + acetyl-CoA = N-acetyl-alpha-D-glucosamine 1-phosphate + CoA + H(+). The catalysed reaction is N-acetyl-alpha-D-glucosamine 1-phosphate + UTP + H(+) = UDP-N-acetyl-alpha-D-glucosamine + diphosphate. Its pathway is nucleotide-sugar biosynthesis; UDP-N-acetyl-alpha-D-glucosamine biosynthesis; N-acetyl-alpha-D-glucosamine 1-phosphate from alpha-D-glucosamine 6-phosphate (route II): step 2/2. It participates in nucleotide-sugar biosynthesis; UDP-N-acetyl-alpha-D-glucosamine biosynthesis; UDP-N-acetyl-alpha-D-glucosamine from N-acetyl-alpha-D-glucosamine 1-phosphate: step 1/1. It functions in the pathway bacterial outer membrane biogenesis; LPS lipid A biosynthesis. Catalyzes the last two sequential reactions in the de novo biosynthetic pathway for UDP-N-acetylglucosamine (UDP-GlcNAc). The C-terminal domain catalyzes the transfer of acetyl group from acetyl coenzyme A to glucosamine-1-phosphate (GlcN-1-P) to produce N-acetylglucosamine-1-phosphate (GlcNAc-1-P), which is converted into UDP-GlcNAc by the transfer of uridine 5-monophosphate (from uridine 5-triphosphate), a reaction catalyzed by the N-terminal domain. This is Bifunctional protein GlmU from Thermus thermophilus (strain ATCC 27634 / DSM 579 / HB8).